The primary structure comprises 572 residues: Far upstream element-binding protein 3 (572 aa).

N-acetylalanine is present on A2. Glycyl lysine isopeptide (Lys-Gly) (interchain with G-Cter in SUMO2) cross-links involve residues K15 and K57. The residue at position 76 (T76) is a Phosphothreonine. 4 consecutive KH domains span residues 77-141 (VITE…KRLL), 162-228 (STIQ…REMV), 253-317 (GGSI…AHII), and 354-421 (VQEI…RQLI). S296 bears the Phosphoserine mark. The disordered stretch occupies residues 426–521 (GGTNLGAPGA…SQPNYSKAWE (96 aa)). Over residues 496–514 (QQPTQQVPSQQSQPQSSQP) the composition is skewed to low complexity. 2 positions are modified to phosphoserine: S539 and S569.

In terms of tissue distribution, detected in a number of cell lines.

Its subcellular location is the nucleus. May interact with single-stranded DNA from the far-upstream element (FUSE). May activate gene expression. The protein is Far upstream element-binding protein 3 (FUBP3) of Homo sapiens (Human).